The primary structure comprises 257 residues: MSFKVVIPARYASSRLPGKPLLDIAGKPMVVRVIERSLASGAAEVVVATDHERIQEAVSSYGYDVMMTSADHASGTDRIAEVVQQRGWEDDTIVVNVQGDEPLIDPRLIGEVAGNLSAHAEASMATACHVLHDTPSILNPNIVKVVLDQQGHALYFSRAPIPYPRDAFAANQDIPPGMPIYRHIGIYAYRAGFLRAYAALTPSAIEYFESLEQLRVLWHGYKISVEITEKAPASGVDTEADLAYVRSVVISGESKLL.

The protein belongs to the KdsB family.

Its subcellular location is the cytoplasm. It carries out the reaction 3-deoxy-alpha-D-manno-oct-2-ulosonate + CTP = CMP-3-deoxy-beta-D-manno-octulosonate + diphosphate. Its pathway is nucleotide-sugar biosynthesis; CMP-3-deoxy-D-manno-octulosonate biosynthesis; CMP-3-deoxy-D-manno-octulosonate from 3-deoxy-D-manno-octulosonate and CTP: step 1/1. It participates in bacterial outer membrane biogenesis; lipopolysaccharide biosynthesis. In terms of biological role, activates KDO (a required 8-carbon sugar) for incorporation into bacterial lipopolysaccharide in Gram-negative bacteria. The protein is 3-deoxy-manno-octulosonate cytidylyltransferase of Methylobacillus flagellatus (strain ATCC 51484 / DSM 6875 / VKM B-1610 / KT).